The primary structure comprises 158 residues: Endoribonuclease YbeY (158 aa).

Zn(2+) contacts are provided by His-119, His-123, and Asp-129.

Belongs to the endoribonuclease YbeY family. Zn(2+) serves as cofactor.

The protein localises to the cytoplasm. Functionally, single strand-specific metallo-endoribonuclease involved in late-stage 70S ribosome quality control and in maturation of the 3' terminus of the 16S rRNA. This chain is Endoribonuclease YbeY, found in Chlamydia felis (strain Fe/C-56) (Chlamydophila felis).